The following is a 364-amino-acid chain: Probable dual-specificity RNA methyltransferase RlmN (364 aa).

Catalysis depends on glutamate 107, which acts as the Proton acceptor. The 234-residue stretch at 113-346 folds into the Radical SAM core domain; the sequence is HDYGNSVCVT…ATIRREQGSD (234 aa). Cysteine 120 and cysteine 351 are joined by a disulfide. Cysteine 127, cysteine 131, and cysteine 134 together coordinate [4Fe-4S] cluster. S-adenosyl-L-methionine contacts are provided by residues 177 to 178, serine 209, 232 to 234, and asparagine 308; these read GE and SLH. Cysteine 351 functions as the S-methylcysteine intermediate in the catalytic mechanism.

The protein belongs to the radical SAM superfamily. RlmN family. It depends on [4Fe-4S] cluster as a cofactor.

The protein resides in the cytoplasm. It catalyses the reaction adenosine(2503) in 23S rRNA + 2 reduced [2Fe-2S]-[ferredoxin] + 2 S-adenosyl-L-methionine = 2-methyladenosine(2503) in 23S rRNA + 5'-deoxyadenosine + L-methionine + 2 oxidized [2Fe-2S]-[ferredoxin] + S-adenosyl-L-homocysteine. It carries out the reaction adenosine(37) in tRNA + 2 reduced [2Fe-2S]-[ferredoxin] + 2 S-adenosyl-L-methionine = 2-methyladenosine(37) in tRNA + 5'-deoxyadenosine + L-methionine + 2 oxidized [2Fe-2S]-[ferredoxin] + S-adenosyl-L-homocysteine. Functionally, specifically methylates position 2 of adenine 2503 in 23S rRNA and position 2 of adenine 37 in tRNAs. Confers resistance to some classes of antibiotics. The chain is Probable dual-specificity RNA methyltransferase RlmN from Staphylococcus aureus (strain bovine RF122 / ET3-1).